The chain runs to 358 residues: uncharacterized protein (358 aa).

The EF-hand domain maps to 229-264 (KQLHEFKLAFDYFDQEKNGWLDYEHFELCLKSQGYN). Residues D242, N246, W248, and H253 each coordinate Ca(2+).

This is an uncharacterized protein from Caenorhabditis elegans.